A 270-amino-acid polypeptide reads, in one-letter code: Basigin (270 aa).

The first 21 residues, 1–21, serve as a signal peptide directing secretion; sequence MAAVLFALLALALLRAGGASA. Positions 22-103 constitute an Ig-like C2-type domain; the sequence is AAGTVTTSVQ…TGEATLTVDG (82 aa). The Extracellular portion of the chain corresponds to 22-207; it reads AAGTVTTSVQ…VTLRVRSRLA (186 aa). 2 cysteine pairs are disulfide-bonded: cysteine 41-cysteine 87 and cysteine 126-cysteine 185. N-linked (GlcNAc...) asparagine glycosylation is found at asparagine 44, asparagine 75, asparagine 152, and asparagine 186. Positions 105 to 203 constitute an Ig-like V-type domain; it reads PRIKAVKKSE…DAAVVTLRVR (99 aa). A helical membrane pass occupies residues 208–228; sequence ALWPFLGIVAEVLVLVTVIFI. The Cytoplasmic portion of the chain corresponds to 229–270; the sequence is YEKRRKPDEVLDDEDAGAAPLKSSGHHVNDDKGKNVRQRNAS. Residues 239 to 270 form a disordered region; the sequence is LDDEDAGAAPLKSSGHHVNDDKGKNVRQRNAS. A Phosphoserine modification is found at serine 252.

As to quaternary structure, homooligomer. Interacts with VEGFA, KDR/VEGFR2, PPIA/CYPA, SLC1A3, SLC16A12, SLC16A11, ATP1B2, MAG, L1CAM and AJAP1. Interacts with PPIL2; regulates BSG transport to the cell membrane. Interacts with XKR8; promoting its localization at the cell membrane. Interacts with SLC16A3; interaction mediates SLC16A3 targeting to the plasma membrane. Interacts with SLC16A1; interaction mediates SLC16A1 targeting to the plasma membrane. Interacts with SLC16A6; this interaction mediates targeting to the plasma membrane.

The protein resides in the cell membrane. It localises to the endoplasmic reticulum membrane. Its subcellular location is the basolateral cell membrane. Its function is as follows. Signaling receptor for cyclophilins, essential for PPIA/CYPA and PPIB/CYPB-dependent signaling related to chemotaxis and adhesion of immune cells. Plays an important role in targeting the monocarboxylate transporters SLC16A1/GLUT1, SLC16A3, SLC16A8, SLC16A11 and SLC16A12 to the plasma membrane. Acts as a coreceptor for vascular endothelial growth factor receptor 2 (KDR/VEGFR2) in endothelial cells enhancing its VEGFA-mediated activation and downstream signaling. Promotes angiogenesis through EPAS1/HIF2A-mediated up-regulation of VEGFA and KDR/VEGFR2 in endothelial cells. The protein is Basigin (BSG) of Oryctolagus cuniculus (Rabbit).